The following is a 309-amino-acid chain: Aspartate carbamoyltransferase catalytic subunit (309 aa).

The carbamoyl phosphate site is built by Arg-59 and Thr-60. An L-aspartate-binding site is contributed by Lys-87. Positions 109, 139, and 142 each coordinate carbamoyl phosphate. Residues Arg-172 and Arg-224 each contribute to the L-aspartate site. The carbamoyl phosphate site is built by Ala-265 and Pro-266.

It belongs to the aspartate/ornithine carbamoyltransferase superfamily. ATCase family. As to quaternary structure, heterododecamer (2C3:3R2) of six catalytic PyrB chains organized as two trimers (C3), and six regulatory PyrI chains organized as three dimers (R2).

It catalyses the reaction carbamoyl phosphate + L-aspartate = N-carbamoyl-L-aspartate + phosphate + H(+). It participates in pyrimidine metabolism; UMP biosynthesis via de novo pathway; (S)-dihydroorotate from bicarbonate: step 2/3. Catalyzes the condensation of carbamoyl phosphate and aspartate to form carbamoyl aspartate and inorganic phosphate, the committed step in the de novo pyrimidine nucleotide biosynthesis pathway. The sequence is that of Aspartate carbamoyltransferase catalytic subunit from Streptococcus uberis (strain ATCC BAA-854 / 0140J).